Consider the following 445-residue polypeptide: Cytoplasmic tRNA 2-thiolation protein 2 (445 aa).

Acidic residues predominate over residues M1–D11. The interval M1–E26 is disordered. Residues G13 to S22 show a composition bias toward basic and acidic residues.

Belongs to the CTU2/NCS2 family.

It is found in the cytoplasm. Its pathway is tRNA modification; 5-methoxycarbonylmethyl-2-thiouridine-tRNA biosynthesis. In terms of biological role, plays a central role in 2-thiolation of mcm(5)S(2)U at tRNA wobble positions of tRNA(Lys), tRNA(Glu) and tRNA(Gln). May act by forming a heterodimer with NCS6/CTU1 that ligates sulfur from thiocarboxylated URM1 onto the uridine of tRNAs at wobble position. The sequence is that of Cytoplasmic tRNA 2-thiolation protein 2 from Aedes aegypti (Yellowfever mosquito).